The chain runs to 166 residues: MGFLVASAVLVCVTSQRVPGYCKKKPAVGPCKALIEKWYFDYSTQSCKTFYYGGCGGNGNKFSSRKKCREACLPKRPSVPVCKQMPDPGFCRAYMPHWFFNSKSGYCEGFVYGGCQGNDNRFKSCWQCMKKCRTAREANRLCWKLTKEFNKKFLRNVPTAKPLPPK.

A signal peptide spans 1–15 (MGFLVASAVLVCVTS). BPTI/Kunitz inhibitor domains lie at 22-72 (CKKK…REAC) and 82-132 (CKQM…MKKC). Intrachain disulfides connect C22-C72, C31-C55, C47-C68, C82-C132, C91-C115, and C107-C128.

Its subcellular location is the secreted. Thrombin-specific inhibitor from tick hemolymph (Ki=20 nM). The protein is Amblin of Amblyomma hebraeum (South African bont tick).